The primary structure comprises 353 residues: Rhodopsin (353 aa).

The Extracellular segment spans residues 1-36; sequence MNGTEGPYFYIPMVNTTGIVRSPYEYPQYYLVNPAA. N-linked (GlcNAc...) asparagine glycosylation is found at Asn2 and Asn15. Residues 37–61 form a helical membrane-spanning segment; that stretch reads YAALGAYMFLLILLGFPINFLTLYV. Topologically, residues 62–73 are cytoplasmic; it reads TIEHKKLRTPLN. A helical membrane pass occupies residues 74–96; it reads YILLNLAVANLFMVFGGFTTTMY. Topologically, residues 97–110 are extracellular; sequence TSMHGYFVLGRLGC. Cys110 and Cys187 are joined by a disulfide. A helical transmembrane segment spans residues 111 to 133; the sequence is NLEGFFATLGGEIALWSLVVLAV. The short motif at 134–136 is the 'Ionic lock' involved in activated form stabilization element; the sequence is ERW. At 134–152 the chain is on the cytoplasmic side; it reads ERWMVVCKPISNFRFGENH. A helical membrane pass occupies residues 153 to 173; the sequence is AIMGLAFTWVMASACAVPPLV. Residues 174 to 202 are Extracellular-facing; that stretch reads GWSRYIPEGMQCSCGIDYYTRAEGFNNES. N-linked (GlcNAc...) asparagine glycosylation is present at Asn200. The helical transmembrane segment at 203-224 threads the bilayer; that stretch reads FVIYMFVCHFLIPLVVVFFCYG. The Cytoplasmic portion of the chain corresponds to 225 to 252; that stretch reads RLLCAVKEAAAAQQESETTQRAEREVSR. The chain crosses the membrane as a helical span at residues 253-274; sequence MVVIMVVAFLICWCPYAGVAWY. Over 275–286 the chain is Extracellular; it reads IFTHQGSEFGPL. A helical membrane pass occupies residues 287 to 308; the sequence is FMTFPAFFAKSSSIYNPMIYIC. Lys296 carries the post-translational modification N6-(retinylidene)lysine. Topologically, residues 309 to 353 are cytoplasmic; sequence MNKQFRHCMITTLCCGKNPFEEEEGASTTSKTEASSVSSSSVSPA. S-palmitoyl cysteine attachment occurs at residues Cys322 and Cys323. The segment at 330-353 is disordered; sequence EEEGASTTSKTEASSVSSSSVSPA. Positions 334-353 are enriched in low complexity; that stretch reads ASTTSKTEASSVSSSSVSPA.

The protein belongs to the G-protein coupled receptor 1 family. Opsin subfamily. In terms of processing, phosphorylated on some or all of the serine and threonine residues present in the C-terminal region. Contains one covalently linked retinal chromophore.

It localises to the membrane. Its subcellular location is the cell projection. It is found in the cilium. The protein resides in the photoreceptor outer segment. Functionally, photoreceptor required for image-forming vision at low light intensity. While most salt water fish species use retinal as chromophore, most freshwater fish use 3-dehydroretinal, or a mixture of retinal and 3-dehydroretinal. Light-induced isomerization of 11-cis to all-trans retinal triggers a conformational change that activates signaling via G-proteins. Subsequent receptor phosphorylation mediates displacement of the bound G-protein alpha subunit by arrestin and terminates signaling. The chain is Rhodopsin (rho) from Mugil cephalus (Flathead mullet).